We begin with the raw amino-acid sequence, 341 residues long: Heat-inducible transcription repressor HrcA (341 aa).

It belongs to the HrcA family.

In terms of biological role, negative regulator of class I heat shock genes (grpE-dnaK-dnaJ and groELS operons). Prevents heat-shock induction of these operons. The polypeptide is Heat-inducible transcription repressor HrcA (Leptothrix cholodnii (strain ATCC 51168 / LMG 8142 / SP-6) (Leptothrix discophora (strain SP-6))).